A 352-amino-acid polypeptide reads, in one-letter code: Pollen-specific protein SF21 (352 aa).

It belongs to the NDRG family. As to expression, pollen.

This Helianthus annuus (Common sunflower) protein is Pollen-specific protein SF21 (SF21).